A 248-amino-acid polypeptide reads, in one-letter code: Type II methyltransferase M.AquIA (248 aa).

Residues 3–248 enclose the SAM-dependent MTase C5-type domain; the sequence is KKLISLFSGA…IKDRIKNHGY (246 aa). The active site involves cysteine 82.

Belongs to the class I-like SAM-binding methyltransferase superfamily. C5-methyltransferase family. Heterodimer of an alpha and a beta subunit.

It carries out the reaction a 2'-deoxycytidine in DNA + S-adenosyl-L-methionine = a 5-methyl-2'-deoxycytidine in DNA + S-adenosyl-L-homocysteine + H(+). Its function is as follows. A methylase, recognizes the double-stranded sequence 5'-CYCGRG-3', methylates C-1 on both strands, and protects the DNA from cleavage by the AquI endonuclease. This chain is Type II methyltransferase M.AquIA (aquIMA), found in Picosynechococcus sp. (strain ATCC 27264 / PCC 7002 / PR-6) (Agmenellum quadruplicatum).